The primary structure comprises 154 residues: Myoglobin (154 aa).

A Globin domain is found at 2–148; that stretch reads GLSDGEWQLV…FRKDIAAKYK (147 aa). Ser-4 carries the phosphoserine modification. Residue His-65 participates in nitrite binding. His-65 contributes to the O2 binding site. Thr-68 is modified (phosphothreonine). His-94 lines the heme b pocket.

Belongs to the globin family. Monomeric.

The protein resides in the cytoplasm. It is found in the sarcoplasm. It carries out the reaction Fe(III)-heme b-[protein] + nitric oxide + H2O = Fe(II)-heme b-[protein] + nitrite + 2 H(+). The catalysed reaction is H2O2 + AH2 = A + 2 H2O. Monomeric heme protein which primary function is to store oxygen and facilitate its diffusion within muscle tissues. Reversibly binds oxygen through a pentacoordinated heme iron and enables its timely and efficient release as needed during periods of heightened demand. Depending on the oxidative conditions of tissues and cells, and in addition to its ability to bind oxygen, it also has a nitrite reductase activity whereby it regulates the production of bioactive nitric oxide. Under stress conditions, like hypoxia and anoxia, it also protects cells against reactive oxygen species thanks to its pseudoperoxidase activity. In Globicephala melas (Long-finned pilot whale), this protein is Myoglobin (MB).